A 627-amino-acid chain; its full sequence is Lactose permease (627 aa).

The tract at residues 1–460 (MKKKLVSRLS…AEIVDQLETQ (460 aa)) is permease. The next 12 membrane-spanning stretches (helical) occupy residues 13–33 (AGAFGNDVFYATLSTYFIVFV), 46–66 (IFIITNLITAIRIGEVLLDPL), 84–104 (WVVGGGIISSLALLALFTDFG), 111–131 (PVVYLVIFGIVYLIMDIFYSF), 159–179 (VGSTIGANLVGVVITPIILFF), 193–213 (WFFFALIVAIVGILTSITVGL), 244–264 (LLWLAFAYWFYGLGINTLNAL), 281–301 (LLYTINTFVGLISASFFPSLA), 309–329 (LFYACIAVMLLGIGVFSVASG), 336–356 (VGAEFFFIPQPLAFLVVLMII), 392–412 (WFVSLIALTAGMTTGATASTI), and 419–439 (VFKLAMFALPAVMLLIAVSIF). Residues 493–597 (DPVFADKKLG…DDTVIVTVIN (105 aa)) form the PTS EIIA type-1 domain. Phosphohistidine; by HPr is present on His545.

It in the N-terminal section; belongs to the sodium:galactoside symporter (TC 2.A.2) family.

Its subcellular location is the cell membrane. Responsible for transport of beta-galactosides into the cell, with the concomitant uptake of protons (symport system), and also for transport of homologous and heterologous exchange of beta-galactosides. The polypeptide is Lactose permease (lacY) (Lactobacillus delbrueckii subsp. bulgaricus (strain ATCC 11842 / DSM 20081 / BCRC 10696 / JCM 1002 / NBRC 13953 / NCIMB 11778 / NCTC 12712 / WDCM 00102 / Lb 14)).